Here is a 483-residue protein sequence, read N- to C-terminus: Sphingomyelin synthase-related 1 (483 aa).

A run of 3 helical transmembrane segments spans residues 182-202, 230-250, and 261-281; these read LIAFAYSSLSFLMTSFVMVLV, FDMCETIGLVLAVVWFTVLFF, and MFSLLGTVFLLRCFTMLITSL. His330 is an active-site residue. The chain crosses the membrane as a helical span at residues 349-369; it reads WTGLHTFTWVLNCFAIFLILA. Active-site residues include His373 and Asp377. A helical membrane pass occupies residues 376–396; sequence IDVFIAFYISSRMFLYYHAYA. Topologically, residues 397-483 are cytoplasmic; that stretch reads YNHAGITATD…NSKNHTKKHN (87 aa). Over residues 450–461 the composition is skewed to basic and acidic residues; it reads EPKITPKSDSSR. The interval 450-483 is disordered; that stretch reads EPKITPKSDSSRKRSSVVAAKQNGNSKNHTKKHN.

This sequence belongs to the sphingomyelin synthase family.

Its subcellular location is the membrane. The sequence is that of Sphingomyelin synthase-related 1 from Caenorhabditis elegans.